Reading from the N-terminus, the 140-residue chain is Hemoglobin subunit beta (140 aa).

Residues 1 to 140 (GGSDVSAFLA…VGEALAKGYH (140 aa)) form the Globin domain. The heme b site is built by His57 and His86.

The protein belongs to the globin family. Heterotetramer of either two alpha-B chains or two alpha-C chains and two beta chains.

The beta chain is a component of adult hemoglobins B. And C. This Aquarana catesbeiana (American bullfrog) protein is Hemoglobin subunit beta (HBB).